We begin with the raw amino-acid sequence, 216 residues long: Sporozoite antigen (216 aa).

The segment at 194–216 is disordered; that stretch reads QQQQPSSYGAPPASSQQPSGFFW.

This chain is Sporozoite antigen, found in Eimeria tenella (Coccidian parasite).